Here is an 830-residue protein sequence, read N- to C-terminus: Penicillin-binding protein 1A (830 aa).

Residues Met-1–Asn-18 are Cytoplasmic-facing. The chain crosses the membrane as a helical; Signal-anchor for type II membrane protein span at residues Val-19–Ile-39. Over Lys-40–Gln-830 the chain is Extracellular. The tract at residues Ser-57–Ala-229 is transglycosylase. Catalysis depends on Glu-96, which acts as the Proton donor; for transglycosylase activity. Residues Ala-357–Lys-641 form a transpeptidase region. The Acyl-ester intermediate; for transpeptidase activity role is filled by Ser-398. Residues Gly-754–Gln-830 are disordered. Over residues Thr-760–Ser-786 the composition is skewed to basic and acidic residues. Over residues Gln-787–Asn-820 the composition is skewed to low complexity. The segment covering Gln-821 to Gln-830 has biased composition (basic and acidic residues).

It in the N-terminal section; belongs to the glycosyltransferase 51 family. The protein in the C-terminal section; belongs to the transpeptidase family.

Its subcellular location is the cell membrane. It carries out the reaction [GlcNAc-(1-&gt;4)-Mur2Ac(oyl-L-Ala-gamma-D-Glu-L-Lys-D-Ala-D-Ala)](n)-di-trans,octa-cis-undecaprenyl diphosphate + beta-D-GlcNAc-(1-&gt;4)-Mur2Ac(oyl-L-Ala-gamma-D-Glu-L-Lys-D-Ala-D-Ala)-di-trans,octa-cis-undecaprenyl diphosphate = [GlcNAc-(1-&gt;4)-Mur2Ac(oyl-L-Ala-gamma-D-Glu-L-Lys-D-Ala-D-Ala)](n+1)-di-trans,octa-cis-undecaprenyl diphosphate + di-trans,octa-cis-undecaprenyl diphosphate + H(+). The catalysed reaction is Preferential cleavage: (Ac)2-L-Lys-D-Ala-|-D-Ala. Also transpeptidation of peptidyl-alanyl moieties that are N-acyl substituents of D-alanine.. Its pathway is cell wall biogenesis; peptidoglycan biosynthesis. In terms of biological role, cell wall formation. Synthesis of cross-linked peptidoglycan from the lipid intermediates. The enzyme has a penicillin-insensitive transglycosylase N-terminal domain (formation of linear glycan strands) and a penicillin-sensitive transpeptidase C-terminal domain (cross-linking of the peptide subunits). This Clostridium botulinum (strain Hall / ATCC 3502 / NCTC 13319 / Type A) protein is Penicillin-binding protein 1A (pbpA).